A 419-amino-acid chain; its full sequence is Putative zinc metalloprotease M6_Spy1682 (419 aa).

His-18 is a binding site for Zn(2+). Residue Glu-19 is part of the active site. Position 22 (His-22) interacts with Zn(2+). Helical transmembrane passes span 169-191, 301-323, 343-365, and 392-411; these read LITN…ILLV, LAWS…FSLN, LESV…LIPI, and AYIT…AVTW. In terms of domain architecture, PDZ spans 175-274; it reads GPMNNFILGI…LKTVAVKPQK (100 aa).

It belongs to the peptidase M50B family. The cofactor is Zn(2+).

The protein localises to the cell membrane. This is Putative zinc metalloprotease M6_Spy1682 from Streptococcus pyogenes serotype M6 (strain ATCC BAA-946 / MGAS10394).